We begin with the raw amino-acid sequence, 382 residues long: Apolipoprotein A-IV (382 aa).

An N-terminal signal peptide occupies residues 1–20; it reads MFLRAVVLTLALVAVTGARA. 13 tandem repeats follow at residues 33–54, 60–81, 82–103, 115–136, 137–158, 159–180, 181–202, 203–224, 225–246, 247–268, 269–286, 287–308, and 309–330. The segment at 33–330 is 13 X 22 AA approximate tandem repeats; that stretch reads DYFSQLSNNA…QVEELRQKLG (298 aa). A disordered region spans residues 362-382; sequence ENQDMPLALPEQEQAPGPLES.

The protein belongs to the apolipoprotein A1/A4/E family. Homodimer.

The protein resides in the secreted. May have a role in chylomicrons and VLDL secretion and catabolism. Required for efficient activation of lipoprotein lipase by ApoC-II; potent activator of LCAT. Apoa-IV is a major component of HDL and chylomicrons. This Acinonyx jubatus (Cheetah) protein is Apolipoprotein A-IV (APOA4).